We begin with the raw amino-acid sequence, 865 residues long: Alanine--tRNA ligase (865 aa).

Residues H554, H558, C656, and H660 each contribute to the Zn(2+) site.

The protein belongs to the class-II aminoacyl-tRNA synthetase family. Zn(2+) serves as cofactor.

It is found in the cytoplasm. It catalyses the reaction tRNA(Ala) + L-alanine + ATP = L-alanyl-tRNA(Ala) + AMP + diphosphate. Its function is as follows. Catalyzes the attachment of alanine to tRNA(Ala) in a two-step reaction: alanine is first activated by ATP to form Ala-AMP and then transferred to the acceptor end of tRNA(Ala). Also edits incorrectly charged Ser-tRNA(Ala) and Gly-tRNA(Ala) via its editing domain. The sequence is that of Alanine--tRNA ligase from Francisella tularensis subsp. novicida (strain U112).